Consider the following 111-residue polypeptide: Dynein light chain Tctex-type (111 aa).

Belongs to the dynein light chain Tctex-type family. In terms of assembly, the cytoplasmic dynein complex consists of two catalytic heavy chains (HCs) and a number of non-catalytic subunits presented by intermediate chains (ICs), light intermediate chains (LICs) and light chains (LCs).

It is found in the cytoplasm. Its subcellular location is the cytoskeleton. Acts as one of several non-catalytic accessory components of the cytoplasmic dynein complex that are thought to be involved in linking dynein to cargos and to adapter proteins that regulate dynein function. Cytoplasmic dynein acts as a motor for the intracellular retrograde motility of vesicles and organelles along microtubules. Required for spermatid differentiation. Is not required for polarized transport in rhabdomere development and appears to be a non-essential component of the cytoplasmic dynein complex. In Drosophila melanogaster (Fruit fly), this protein is Dynein light chain Tctex-type (Dlc90F).